We begin with the raw amino-acid sequence, 508 residues long: Steroid 17-alpha-hydroxylase/17,20 lyase (508 aa).

Cys442 is a binding site for heme.

The protein belongs to the cytochrome P450 family. Heme serves as cofactor.

The protein localises to the endoplasmic reticulum membrane. It is found in the microsome membrane. The enzyme catalyses a C21-steroid + reduced [NADPH--hemoprotein reductase] + O2 = a 17alpha-hydroxy-C21-steroid + oxidized [NADPH--hemoprotein reductase] + H2O + H(+). The catalysed reaction is progesterone + reduced [NADPH--hemoprotein reductase] + O2 = 17alpha-hydroxyprogesterone + oxidized [NADPH--hemoprotein reductase] + H2O + H(+). It catalyses the reaction pregnenolone + reduced [NADPH--hemoprotein reductase] + O2 = 17alpha-hydroxypregnenolone + oxidized [NADPH--hemoprotein reductase] + H2O + H(+). It carries out the reaction 17alpha-hydroxyprogesterone + reduced [NADPH--hemoprotein reductase] + O2 = androst-4-ene-3,17-dione + acetate + oxidized [NADPH--hemoprotein reductase] + H2O + 2 H(+). The enzyme catalyses 17alpha-hydroxyprogesterone + reduced [NADPH--hemoprotein reductase] + O2 = 16alpha,17alpha-dihydroxyprogesterone + oxidized [NADPH--hemoprotein reductase] + H2O + H(+). The catalysed reaction is 16alpha,17alpha-dihydroxyprogesterone + reduced [NADPH--hemoprotein reductase] + O2 = 6beta,16alpha,17alpha-trihydroxyprogesterone + oxidized [NADPH--hemoprotein reductase] + H2O + H(+). It catalyses the reaction 17alpha-hydroxypregnenolone + reduced [NADPH--hemoprotein reductase] + O2 = 3beta-hydroxyandrost-5-en-17-one + acetate + oxidized [NADPH--hemoprotein reductase] + H2O + 2 H(+). It carries out the reaction 16alpha,17alpha-dihydroxypregnenolone + reduced [NADPH--hemoprotein reductase] + O2 = 3beta,16alpha-dihydroxy-androst-5-en-17-one + acetate + oxidized [NADPH--hemoprotein reductase] + H2O + 2 H(+). The enzyme catalyses 3beta-hydroxyandrost-5-en-17-one + reduced [NADPH--hemoprotein reductase] + O2 = 3beta,16alpha-dihydroxy-androst-5-en-17-one + oxidized [NADPH--hemoprotein reductase] + H2O + H(+). The catalysed reaction is androst-4-ene-3,17-dione + reduced [NADPH--hemoprotein reductase] + O2 = 16alpha-hydroxyandrost-4-ene-3,17-dione + oxidized [NADPH--hemoprotein reductase] + H2O + H(+). Its pathway is steroid hormone biosynthesis. It functions in the pathway steroid biosynthesis; glucocorticoid biosynthesis. With respect to regulation, regulated predominantly by intracellular cAMP levels. The 17,20-lyase activity is stimulated by cytochrome b5, which acts as an allosteric effector increasing the Vmax of the lyase activity. A cytochrome P450 monooxygenase involved in corticoid and androgen biosynthesis. Catalyzes 17-alpha hydroxylation of C21 steroids, which is common for both pathways. A second oxidative step, required only for androgen synthesis, involves an acyl-carbon cleavage. The 17-alpha hydroxy intermediates, as part of adrenal glucocorticoids biosynthesis pathway, are precursors of cortisol. Hydroxylates steroid hormones, pregnenolone and progesterone to form 17-alpha hydroxy metabolites, followed by the cleavage of the C17-C20 bond to form C19 steroids, dehydroepiandrosterone (DHEA) and androstenedione. Has 16-alpha hydroxylase activity. Catalyzes 16-alpha hydroxylation of 17-alpha hydroxy pregnenolone, followed by the cleavage of the C17-C20 bond to form 16-alpha-hydroxy DHEA. Also 16-alpha hydroxylates androgens, relevant for estriol synthesis. Mechanistically, uses molecular oxygen inserting one oxygen atom into a substrate, and reducing the second into a water molecule, with two electrons provided by NADPH via cytochrome P450 reductase (CPR; NADPH-ferrihemoprotein reductase). The protein is Steroid 17-alpha-hydroxylase/17,20 lyase (CYP17A1) of Equus caballus (Horse).